Here is a 61-residue protein sequence, read N- to C-terminus: Conotoxin Vn5.3 (61 aa).

The first 19 residues, Met-1–Gly-19, serve as a signal peptide directing secretion. Residues Val-20–Arg-50 constitute a propeptide that is removed on maturation.

The protein belongs to the conotoxin T superfamily. In terms of processing, contains 2 disulfide bonds that can be either 'C1-C3, C2-C4' or 'C1-C4, C2-C3', since these disulfide connectivities have been observed for conotoxins with cysteine framework V (for examples, see AC P0DQQ7 and AC P81755). As to expression, expressed by the venom duct.

It is found in the secreted. The chain is Conotoxin Vn5.3 from Conus ventricosus (Mediterranean cone).